Here is a 195-residue protein sequence, read N- to C-terminus: MRTASISRRTAETDVSVSIDLDGTGKATIATGVGFLDHMLELFARHGLFDVTIKVEGDLHVDQHHTTEDAGIALGQAVAQALGDKRGIARYADIHLPMDETLSRIAIDISGRPFLVFRTSFRVEKIGQFDTELVREFFQAFAMNAGITLHVETLYGENAHHIAESVFKGLARSLRKAVAIDPREDGRVPSTKGSL.

This sequence belongs to the imidazoleglycerol-phosphate dehydratase family.

The protein resides in the cytoplasm. It catalyses the reaction D-erythro-1-(imidazol-4-yl)glycerol 3-phosphate = 3-(imidazol-4-yl)-2-oxopropyl phosphate + H2O. It functions in the pathway amino-acid biosynthesis; L-histidine biosynthesis; L-histidine from 5-phospho-alpha-D-ribose 1-diphosphate: step 6/9. The protein is Imidazoleglycerol-phosphate dehydratase of Methylorubrum extorquens (strain CM4 / NCIMB 13688) (Methylobacterium extorquens).